A 90-amino-acid polypeptide reads, in one-letter code: Protein RALF-like 3 (90 aa).

The signal sequence occupies residues M1 to A29. 2 disulfide bridges follow: C59/C67 and C80/C86.

This sequence belongs to the plant rapid alkalinization factor (RALF) family.

It is found in the secreted. Cell signaling peptide that may regulate plant stress, growth, and development. Mediates a rapid alkalinization of extracellular space by mediating a transient increase in the cytoplasmic Ca(2+) concentration leading to a calcium-dependent signaling events through a cell surface receptor and a concomitant activation of some intracellular mitogen-activated protein kinases. This chain is Protein RALF-like 3 (RALFL3), found in Arabidopsis thaliana (Mouse-ear cress).